Reading from the N-terminus, the 405-residue chain is tRNA-specific 2-thiouridylase MnmA (405 aa).

Residues 41–48 and Leu67 each bind ATP; that span reads AMSGGVDS. Cys135 functions as the Nucleophile in the catalytic mechanism. Cys135 and Cys231 are joined by a disulfide. Gly159 is an ATP binding site. The tract at residues 181–183 is interaction with tRNA; sequence KDQ. The active-site Cysteine persulfide intermediate is Cys231.

This sequence belongs to the MnmA/TRMU family.

The protein resides in the cytoplasm. The enzyme catalyses S-sulfanyl-L-cysteinyl-[protein] + uridine(34) in tRNA + AH2 + ATP = 2-thiouridine(34) in tRNA + L-cysteinyl-[protein] + A + AMP + diphosphate + H(+). Its function is as follows. Catalyzes the 2-thiolation of uridine at the wobble position (U34) of tRNA, leading to the formation of s(2)U34. This Maricaulis maris (strain MCS10) (Caulobacter maris) protein is tRNA-specific 2-thiouridylase MnmA.